A 242-amino-acid polypeptide reads, in one-letter code: Probable transcriptional regulatory protein BTH_I1015 (242 aa).

Belongs to the TACO1 family.

The protein resides in the cytoplasm. The polypeptide is Probable transcriptional regulatory protein BTH_I1015 (Burkholderia thailandensis (strain ATCC 700388 / DSM 13276 / CCUG 48851 / CIP 106301 / E264)).